Consider the following 97-residue polypeptide: Co-chaperonin GroES (97 aa).

The protein belongs to the GroES chaperonin family. In terms of assembly, heptamer of 7 subunits arranged in a ring. Interacts with the chaperonin GroEL.

It is found in the cytoplasm. Together with the chaperonin GroEL, plays an essential role in assisting protein folding. The GroEL-GroES system forms a nano-cage that allows encapsulation of the non-native substrate proteins and provides a physical environment optimized to promote and accelerate protein folding. GroES binds to the apical surface of the GroEL ring, thereby capping the opening of the GroEL channel. This is Co-chaperonin GroES from Pseudomonas savastanoi pv. phaseolicola (strain 1448A / Race 6) (Pseudomonas syringae pv. phaseolicola (strain 1448A / Race 6)).